A 444-amino-acid chain; its full sequence is MLNIFKPAPHIERLDDSKMDAAYKRLRLQVFIGIFIGYAGYYLLRKNFAFAIPYLQEQGFSKTELGLVLAAVSIAYGFSKFIMGMVSDRCNPRYFLATGLFLSAIVNILFVSMPWVTSSVTIMFIFMFINGWFQGMGWPPCGRTMAHWFSISERGTKMSIWNVAHNIGGGILAPLVTLGIAMFVTWKSVFFFPAIIAIIISFLIVLLVRDTPQSCGLPPIEEYRNDYPKHAFKNQEKELTTKEILFQYVLNNKFLWYIAFANVFVYFVRYGVVDWAPTYLTEAKGFSPEDSRWSYFLYEYAGIPGTILCGWISDRFFKSRRAPAGVLFMAGVFIAVLVYWLNPAGNPLVDNIALISIGFLIYGPVMLIGLQAIDLAPKKAAGTAAGLTGFFGYIGGSAFANAIMGFVVDRFNWNGGFIMLISSCILAIVFLALTWNTGKRAEHV.

Residues 1 to 36 (MLNIFKPAPHIERLDDSKMDAAYKRLRLQVFIGIFI) lie on the Cytoplasmic side of the membrane. The helical transmembrane segment at 37-57 (GYAGYYLLRKNFAFAIPYLQE) threads the bilayer. The Extracellular segment spans residues 58 to 63 (QGFSKT). The helical transmembrane segment at 64–84 (ELGLVLAAVSIAYGFSKFIMG) threads the bilayer. At 85-93 (MVSDRCNPR) the chain is on the cytoplasmic side. Residues 94–112 (YFLATGLFLSAIVNILFVS) traverse the membrane as a helical segment. Residues 113-120 (MPWVTSSV) are Extracellular-facing. The chain crosses the membrane as a helical span at residues 121–141 (TIMFIFMFINGWFQGMGWPPC). At 142-160 (GRTMAHWFSISERGTKMSI) the chain is on the cytoplasmic side. A helical membrane pass occupies residues 161–180 (WNVAHNIGGGILAPLVTLGI). Residues 181 to 189 (AMFVTWKSV) lie on the Extracellular side of the membrane. The chain crosses the membrane as a helical span at residues 190–207 (FFFPAIIAIIISFLIVLL). The Cytoplasmic segment spans residues 208–261 (VRDTPQSCGLPPIEEYRNDYPKHAFKNQEKELTTKEILFQYVLNNKFLWYIAFA). Residues 262 to 282 (NVFVYFVRYGVVDWAPTYLTE) form a helical membrane-spanning segment. Over 283 to 287 (AKGFS) the chain is Extracellular. A helical membrane pass occupies residues 288–308 (PEDSRWSYFLYEYAGIPGTIL). Over 309–321 (CGWISDRFFKSRR) the chain is Cytoplasmic. The chain crosses the membrane as a helical span at residues 322-341 (APAGVLFMAGVFIAVLVYWL). Over 342–346 (NPAGN) the chain is Extracellular. A helical membrane pass occupies residues 347 to 368 (PLVDNIALISIGFLIYGPVMLI). At 369 to 387 (GLQAIDLAPKKAAGTAAGL) the chain is on the cytoplasmic side. Residues 388 to 409 (TGFFGYIGGSAFANAIMGFVVD) traverse the membrane as a helical segment. At 410–414 (RFNWN) the chain is on the extracellular side. A helical membrane pass occupies residues 415 to 435 (GGFIMLISSCILAIVFLALTW). The Cytoplasmic segment spans residues 436 to 444 (NTGKRAEHV).

Belongs to the major facilitator superfamily. Organophosphate:Pi antiporter (OPA) (TC 2.A.1.4) family.

It localises to the cell membrane. In terms of biological role, responsible for glycerol-3-phosphate uptake. In Bacillus subtilis (strain 168), this protein is Glycerol-3-phosphate transporter (glpT).